A 508-amino-acid chain; its full sequence is Light-independent protochlorophyllide reductase subunit B (508 aa).

Residue Asp-36 participates in [4Fe-4S] cluster binding. Asp-294 acts as the Proton donor in catalysis. Position 429-430 (Gly-429–Met-430) interacts with substrate.

It belongs to the ChlB/BchB/BchZ family. In terms of assembly, protochlorophyllide reductase is composed of three subunits; ChlL, ChlN and ChlB. Forms a heterotetramer of two ChlB and two ChlN subunits. [4Fe-4S] cluster serves as cofactor.

It is found in the plastid. It localises to the chloroplast. The enzyme catalyses chlorophyllide a + oxidized 2[4Fe-4S]-[ferredoxin] + 2 ADP + 2 phosphate = protochlorophyllide a + reduced 2[4Fe-4S]-[ferredoxin] + 2 ATP + 2 H2O. It functions in the pathway porphyrin-containing compound metabolism; chlorophyll biosynthesis (light-independent). Its function is as follows. Component of the dark-operative protochlorophyllide reductase (DPOR) that uses Mg-ATP and reduced ferredoxin to reduce ring D of protochlorophyllide (Pchlide) to form chlorophyllide a (Chlide). This reaction is light-independent. The NB-protein (ChlN-ChlB) is the catalytic component of the complex. This chain is Light-independent protochlorophyllide reductase subunit B, found in Pyropia yezoensis (Susabi-nori).